A 513-amino-acid chain; its full sequence is Maturase K (513 aa).

Belongs to the intron maturase 2 family. MatK subfamily.

Its subcellular location is the plastid. It is found in the chloroplast. Usually encoded in the trnK tRNA gene intron. Probably assists in splicing its own and other chloroplast group II introns. This chain is Maturase K, found in Arundo donax (Giant reed).